The chain runs to 757 residues: Probable phospholipase C20G8.02, mitochondrial (757 aa).

The N-terminal 13 residues, 1–13 (MILYIVLPFYVRT), are a transit peptide targeting the mitochondrion. Positions 289 to 330 (ESNSKPSTPVPTEELTSTTLLNDSSDPSDNFTPSNTESTIDL) are disordered. The segment covering 302-329 (ELTSTTLLNDSSDPSDNFTPSNTESTID) has biased composition (polar residues). Residue serine 524 is part of the active site. The DDHD domain occupies 547 to 757 (LDFPVANFFA…LAHFILTQLL (211 aa)).

The protein belongs to the PA-PLA1 family.

Its subcellular location is the mitochondrion. Its function is as follows. Probable phospholipase that hydrolyzes phosphatidic acid. In Schizosaccharomyces pombe (strain 972 / ATCC 24843) (Fission yeast), this protein is Probable phospholipase C20G8.02, mitochondrial.